The sequence spans 375 residues: Trichodiene synthase (375 aa).

Belongs to the trichodiene synthase family.

It catalyses the reaction (2E,6E)-farnesyl diphosphate = trichodiene + diphosphate. It participates in sesquiterpene biosynthesis; trichothecene biosynthesis. TS is a member of the terpene cyclase group of enzymes. It catalyzes the isomerization and cyclization of farnesyl pyro-phosphate to form trichodiene, the first cyclic intermediate in the biosynthetic pathway for trichothecenes. It serves to branch trichothecene biosynthesis from the isoprenoid pathway. This chain is Trichodiene synthase (TRI5), found in Fusarium asiaticum.